Here is a 371-residue protein sequence, read N- to C-terminus: MRVIITGGGTGGHVYPALAIARGLKEARPGVELLYIGTARGLEADVVPRAGLTLATITVQGLVRRQVWKNIPALVKTGRGLGEAWQQVRRFRPDVVVGTGGYVSGPVCLAAALQGVPVILHEQNAFPGVTNRLLAILARCVCLTFPEAASRFPRRAKLVTTGLPVRPEIIQADRDSCRQHFGLRPEQLFLVTVGGSQGARSINGAMLPILKELAGCQDVSLLQVTGRRDYEAYLQQVRTQGIDLAKYGNITIEPYVYNLEQALAAADLVIGRAGASFLAEVLARGLPSVLVPYPHAAANHQEYNARAVARQGAAVVVLDRELKGGRLYQVVFELLRSREKLKAMAAAAASLGRPGALEAIIQVILKTVESG.

Residues 10 to 12 (TGG), asparagine 124, arginine 166, serine 196, and glutamine 301 contribute to the UDP-N-acetyl-alpha-D-glucosamine site.

The protein belongs to the glycosyltransferase 28 family. MurG subfamily.

Its subcellular location is the cell membrane. It carries out the reaction di-trans,octa-cis-undecaprenyl diphospho-N-acetyl-alpha-D-muramoyl-L-alanyl-D-glutamyl-meso-2,6-diaminopimeloyl-D-alanyl-D-alanine + UDP-N-acetyl-alpha-D-glucosamine = di-trans,octa-cis-undecaprenyl diphospho-[N-acetyl-alpha-D-glucosaminyl-(1-&gt;4)]-N-acetyl-alpha-D-muramoyl-L-alanyl-D-glutamyl-meso-2,6-diaminopimeloyl-D-alanyl-D-alanine + UDP + H(+). The protein operates within cell wall biogenesis; peptidoglycan biosynthesis. Cell wall formation. Catalyzes the transfer of a GlcNAc subunit on undecaprenyl-pyrophosphoryl-MurNAc-pentapeptide (lipid intermediate I) to form undecaprenyl-pyrophosphoryl-MurNAc-(pentapeptide)GlcNAc (lipid intermediate II). The chain is UDP-N-acetylglucosamine--N-acetylmuramyl-(pentapeptide) pyrophosphoryl-undecaprenol N-acetylglucosamine transferase from Moorella thermoacetica (strain ATCC 39073 / JCM 9320).